The following is a 359-amino-acid chain: Fructose-bisphosphate aldolase class 2 (359 aa).

Ser-62 provides a ligand contact to D-glyceraldehyde 3-phosphate. Asp-110 (proton donor) is an active-site residue. Zn(2+) is bound by residues His-111, Asp-145, Glu-175, and His-227. Residue Gly-228 coordinates dihydroxyacetone phosphate. Residue His-265 participates in Zn(2+) binding. Dihydroxyacetone phosphate contacts are provided by residues 266–268 and 287–290; these read GGS and NIDT.

This sequence belongs to the class II fructose-bisphosphate aldolase family. Zn(2+) serves as cofactor.

The enzyme catalyses beta-D-fructose 1,6-bisphosphate = D-glyceraldehyde 3-phosphate + dihydroxyacetone phosphate. It participates in carbohydrate degradation; glycolysis; D-glyceraldehyde 3-phosphate and glycerone phosphate from D-glucose: step 4/4. Functionally, catalyzes the aldol condensation of dihydroxyacetone phosphate (DHAP or glycerone-phosphate) with glyceraldehyde 3-phosphate (G3P) to form fructose 1,6-bisphosphate (FBP) in gluconeogenesis and the reverse reaction in glycolysis. The polypeptide is Fructose-bisphosphate aldolase class 2 (fbaA) (Buchnera aphidicola subsp. Baizongia pistaciae (strain Bp)).